Consider the following 564-residue polypeptide: Esterase FE4 (564 aa).

The signal sequence occupies residues 1–23 (MKNTCGILLNLFLFIGCFLTCSA). Asn81 carries N-linked (GlcNAc...) asparagine glycosylation. Residues Cys89 and Cys106 are joined by a disulfide bond. Ser214 acts as the Acyl-ester intermediate in catalysis. Cysteines 266 and 277 form a disulfide. Asn269 is a glycosylation site (N-linked (GlcNAc...) asparagine). Catalysis depends on Glu339, which acts as the Charge relay system. N-linked (GlcNAc...) asparagine glycans are attached at residues Asn371, Asn404, and Asn443. His463 serves as the catalytic Charge relay system.

It belongs to the type-B carboxylesterase/lipase family.

It carries out the reaction a carboxylic ester + H2O = an alcohol + a carboxylate + H(+). Overproduction of nonspecific esterases is a common mechanism of resistance to organophosphate insecticides. This Myzus persicae (Green peach aphid) protein is Esterase FE4.